The sequence spans 895 residues: Zyg eleven-related protein 1 (895 aa).

Disordered stretches follow at residues 58–78 (HGPA…PDQG) and 195–221 (RGQM…SDHQ). Residues 205–220 (SPLSPSSQPSSIQSDH) show a composition bias toward low complexity.

In terms of assembly, interacts with elc-1. Part of an E3 ubiquitin ligase complex including zer-11, cul-2 and elc-1.

Its function is as follows. Acts as a target recruitment subunit in the E3 ubiquitin ligase complex zer-1-cul-2-elc-1. The polypeptide is Zyg eleven-related protein 1 (zer-1) (Caenorhabditis elegans).